The sequence spans 134 residues: ATP synthase epsilon chain (134 aa).

The protein belongs to the ATPase epsilon chain family. As to quaternary structure, F-type ATPases have 2 components, CF(1) - the catalytic core - and CF(0) - the membrane proton channel. CF(1) has five subunits: alpha(3), beta(3), gamma(1), delta(1), epsilon(1). CF(0) has three main subunits: a, b and c. In this bacterium the a and b subunits are transcribed but do not seem to be translated, thus the ATP synthase consists of the alpha, beta, gamma, delta, epsilon and c subunits.

The protein resides in the cell membrane. Functionally, produces ATP from ADP in the presence of a proton gradient across the membrane. This chain is ATP synthase epsilon chain, found in Moorella thermoacetica (strain ATCC 39073 / JCM 9320).